A 149-amino-acid chain; its full sequence is Non-structural protein 7b (149 aa).

This chain is Non-structural protein 7b, found in Bat coronavirus HKU9 (BtCoV).